We begin with the raw amino-acid sequence, 173 residues long: Crossover junction endodeoxyribonuclease RuvC (173 aa).

Residues aspartate 8, glutamate 67, and aspartate 139 contribute to the active site. 3 residues coordinate Mg(2+): aspartate 8, glutamate 67, and aspartate 139.

This sequence belongs to the RuvC family. Homodimer which binds Holliday junction (HJ) DNA. The HJ becomes 2-fold symmetrical on binding to RuvC with unstacked arms; it has a different conformation from HJ DNA in complex with RuvA. In the full resolvosome a probable DNA-RuvA(4)-RuvB(12)-RuvC(2) complex forms which resolves the HJ. Requires Mg(2+) as cofactor.

The protein localises to the cytoplasm. It catalyses the reaction Endonucleolytic cleavage at a junction such as a reciprocal single-stranded crossover between two homologous DNA duplexes (Holliday junction).. The RuvA-RuvB-RuvC complex processes Holliday junction (HJ) DNA during genetic recombination and DNA repair. Endonuclease that resolves HJ intermediates. Cleaves cruciform DNA by making single-stranded nicks across the HJ at symmetrical positions within the homologous arms, yielding a 5'-phosphate and a 3'-hydroxyl group; requires a central core of homology in the junction. The consensus cleavage sequence is 5'-(A/T)TT(C/G)-3'. Cleavage occurs on the 3'-side of the TT dinucleotide at the point of strand exchange. HJ branch migration catalyzed by RuvA-RuvB allows RuvC to scan DNA until it finds its consensus sequence, where it cleaves and resolves the cruciform DNA. The protein is Crossover junction endodeoxyribonuclease RuvC of Salmonella dublin (strain CT_02021853).